The chain runs to 380 residues: Cytochrome b (380 aa).

A run of 4 helical transmembrane segments spans residues 34-54 (FGSLLAMCLMTQIITGLLLAT), 78-99 (WLIRNLHANGASFFFICIYLHI), 114-134 (WNTGVILLLTLMATAFVGYVL), and 179-199 (FFALHFLLPFIIAGITIIHLA). Residues His-84 and His-98 each coordinate heme b. Residues His-183 and His-197 each coordinate heme b. His-202 is an a ubiquinone binding site. Transmembrane regions (helical) follow at residues 227–247 (LKDILGLALMITPLLTLALFS), 289–309 (LGGVLALAASVLILLLIPFLH), 321–341 (LSQILFWLLAANLLILTWIGS), and 348–368 (FIIIGQLASFSYFTTILILFP).

It belongs to the cytochrome b family. The cytochrome bc1 complex contains 11 subunits: 3 respiratory subunits (MT-CYB, CYC1 and UQCRFS1), 2 core proteins (UQCRC1 and UQCRC2) and 6 low-molecular weight proteins (UQCRH/QCR6, UQCRB/QCR7, UQCRQ/QCR8, UQCR10/QCR9, UQCR11/QCR10 and a cleavage product of UQCRFS1). This cytochrome bc1 complex then forms a dimer. Heme b serves as cofactor.

It is found in the mitochondrion inner membrane. Its function is as follows. Component of the ubiquinol-cytochrome c reductase complex (complex III or cytochrome b-c1 complex) that is part of the mitochondrial respiratory chain. The b-c1 complex mediates electron transfer from ubiquinol to cytochrome c. Contributes to the generation of a proton gradient across the mitochondrial membrane that is then used for ATP synthesis. The sequence is that of Cytochrome b (MT-CYB) from Callipepla gambelii (Gambel's quail).